A 214-amino-acid polypeptide reads, in one-letter code: Urease accessory protein UreG (214 aa).

23–30 (GPVGSGKT) is a binding site for GTP.

Belongs to the SIMIBI class G3E GTPase family. UreG subfamily. In terms of assembly, homodimer. UreD, UreF and UreG form a complex that acts as a GTP-hydrolysis-dependent molecular chaperone, activating the urease apoprotein by helping to assemble the nickel containing metallocenter of UreC. The UreE protein probably delivers the nickel.

The protein localises to the cytoplasm. In terms of biological role, facilitates the functional incorporation of the urease nickel metallocenter. This process requires GTP hydrolysis, probably effectuated by UreG. This is Urease accessory protein UreG from Bordetella bronchiseptica (strain ATCC BAA-588 / NCTC 13252 / RB50) (Alcaligenes bronchisepticus).